The sequence spans 318 residues: 2-keto-3-deoxygluconate permease (318 aa).

A run of 10 helical transmembrane segments spans residues 10–30 (IPGG…TFTP), 42–62 (GLIT…GASI), 76–96 (VLVI…GTFL), 105–125 (LLAG…NGGL), 139–159 (AGAF…VILG), 162–182 (GIAT…LIGF), 199–219 (VQTL…LAVI), 224–244 (FAGI…LIIA), 263–283 (AGAA…FAPV), and 289–309 (ALVA…TALW).

It belongs to the KdgT transporter family.

It localises to the cell inner membrane. It carries out the reaction 2-dehydro-3-deoxy-D-gluconate(in) + H(+)(in) = 2-dehydro-3-deoxy-D-gluconate(out) + H(+)(out). Its function is as follows. Catalyzes the proton-dependent uptake of 2-keto-3-deoxygluconate (KDG) into the cell. The polypeptide is 2-keto-3-deoxygluconate permease (Pectobacterium carotovorum subsp. carotovorum (strain PC1)).